The sequence spans 175 residues: Ribosome maturation factor RimM (175 aa).

The 80-residue stretch at E96–F175 folds into the PRC barrel domain.

Belongs to the RimM family. As to quaternary structure, binds ribosomal protein uS19.

The protein localises to the cytoplasm. Functionally, an accessory protein needed during the final step in the assembly of 30S ribosomal subunit, possibly for assembly of the head region. Essential for efficient processing of 16S rRNA. May be needed both before and after RbfA during the maturation of 16S rRNA. It has affinity for free ribosomal 30S subunits but not for 70S ribosomes. The sequence is that of Ribosome maturation factor RimM from Histophilus somni (strain 129Pt) (Haemophilus somnus).